An 891-amino-acid polypeptide reads, in one-letter code: Bifunctional aldehyde-alcohol dehydrogenase AdhE (891 aa).

An aldehyde dehydrogenase region spans residues 2-440 (AVTNVAELNA…ENVGPKHLIN (439 aa)). Residues 110–115 (IVPTTN), Gly195, and Gly213 each bind NAD(+). Cys246 functions as the Nucleophile in the catalytic mechanism. Residues Glu335 and Leu419 each contribute to the NAD(+) site. Positions 441–448 (KKTVAKRA) are linker. Positions 449–891 (ENMLWHKLPK…KAEKKAKKSA (443 aa)) are alcohol dehydrogenase. NAD(+) contacts are provided by residues Asp487, Asp519, 546 to 550 (GSPMD), 597 to 598 (TT), Val610, Lys619, and Leu638. Asp653, His657, His723, and His737 together coordinate Fe cation.

In the N-terminal section; belongs to the aldehyde dehydrogenase family. The protein in the C-terminal section; belongs to the iron-containing alcohol dehydrogenase family. As to quaternary structure, forms long filaments, called spirosomes. Requires Fe(2+) as cofactor.

The catalysed reaction is acetaldehyde + NAD(+) + CoA = acetyl-CoA + NADH + H(+). The enzyme catalyses ethanol + NAD(+) = acetaldehyde + NADH + H(+). It catalyses the reaction a primary alcohol + NAD(+) = an aldehyde + NADH + H(+). In terms of biological role, under fermentative conditions, catalyzes the sequential NADH-dependent reduction of acetyl-CoA to acetaldehyde and then to ethanol. Plays an important role in virulence and is critical for proper regulation of virulence gene expression. The chain is Bifunctional aldehyde-alcohol dehydrogenase AdhE from Escherichia coli O157:H7.